The chain runs to 122 residues: Large ribosomal subunit protein uL14c (122 aa).

Belongs to the universal ribosomal protein uL14 family. Part of the 50S ribosomal subunit.

The protein localises to the plastid. Its subcellular location is the chloroplast. Binds to 23S rRNA. This chain is Large ribosomal subunit protein uL14c, found in Chaetosphaeridium globosum (Charophycean green alga).